The sequence spans 525 residues: Pre-mRNA-processing factor 19 homolog 2 (525 aa).

The U-box domain maps to 1-70 (MNCAISGEVP…PKTLHTASIP (70 aa)). WD repeat units lie at residues 220-261 (TNKP…STLT), 262-301 (GHSK…NYAC), 307-346 (DHSA…CLAQ), 351-390 (SKNV…NVAK), 393-431 (GHTG…NFKS), 433-469 (LSAD…AEWN), and 478-517 (SGTG…KANV). A DWD box motif is present at residues 409 to 424 (FLATAAEDGVRLWDLR).

The protein belongs to the WD repeat PRP19 family. As to quaternary structure, homotetramer. Component of the multiprotein assembly MOS4-associated complex (MAC) at least composed of MOS4, CDC5, PRL1 and PRP19 which is related to the PRP19C/Prp19 complex/NTC/Nineteen complex identified in other organisms. Associated with the spliceosome.

It localises to the nucleus. It catalyses the reaction S-ubiquitinyl-[E2 ubiquitin-conjugating enzyme]-L-cysteine + [acceptor protein]-L-lysine = [E2 ubiquitin-conjugating enzyme]-L-cysteine + N(6)-ubiquitinyl-[acceptor protein]-L-lysine.. The protein operates within protein modification; protein ubiquitination. Its function is as follows. Probable ubiquitin-protein ligase which is mainly involved pre-mRNA splicing and DNA repair. Component of the MAC complex that probably regulates defense responses through transcriptional control and thereby is essential for plant innate immunity. The chain is Pre-mRNA-processing factor 19 homolog 2 (PRP19B) from Arabidopsis thaliana (Mouse-ear cress).